A 584-amino-acid chain; its full sequence is Insulin-like growth factor 2 mRNA-binding protein 3 (584 aa).

RRM domains follow at residues 2 to 75 (NKLY…HSVP) and 81 to 156 (RKLQ…YIPD). A disordered region spans residues 160–199 (AQQPPQQHPQGRRGFGQRGPPRQGSPSATTRQKPQSDVPL). The segment covering 184–194 (SPSATTRQKPQ) has biased composition (polar residues). KH domains follow at residues 196–261 (DVPL…CKII), 277–344 (EIPL…EEEI), 409–474 (SETV…QGRI), and 491–557 (KLEA…QRKI).

Belongs to the RRM IMP/VICKZ family. Homodimer and multimer.

The protein localises to the cytoplasm. It localises to the nucleus. Its subcellular location is the P-body. The protein resides in the stress granule. Functionally, RNA-binding factor that may recruit target transcripts to cytoplasmic protein-RNA complexes (mRNPs). This transcript 'caging' into mRNPs allows mRNA transport and transient storage. It also modulates the rate and location at which target transcripts encounter the translational apparatus and shields them from endonuclease attacks or microRNA-mediated degradation. Preferentially binds to N6-methyladenosine (m6A)-containing mRNAs and increases their stability. This Gallus gallus (Chicken) protein is Insulin-like growth factor 2 mRNA-binding protein 3 (IGF2BP3).